Consider the following 299-residue polypeptide: Taste receptor type 2 member 4 (299 aa).

Residues 1–9 lie on the Extracellular side of the membrane; sequence MLRLFYFSA. A helical membrane pass occupies residues 10 to 30; sequence IIASVILNFVGIIMNLFITVV. The Cytoplasmic portion of the chain corresponds to 31–46; it reads NCKTWVKSHRISSSDR. The chain crosses the membrane as a helical span at residues 47 to 67; sequence ILFSLGITRFLMLGLFLVNTI. Residues 68-81 are Extracellular-facing; the sequence is YFVSSNTERSVYLS. A helical membrane pass occupies residues 82–102; it reads AFFVLCFMFLDSSSLWFVTLL. Over 103–131 the chain is Cytoplasmic; sequence NILYCVKITNFQHSVFLLLKRNISPKIPR. Residues 132–152 traverse the membrane as a helical segment; sequence LLLACVLISAFTTCLYITLSQ. Residues 153-172 are Extracellular-facing; the sequence is ASPFPELVTTRNNTSFNINE. 2 N-linked (GlcNAc...) asparagine glycosylation sites follow: Asn-164 and Asn-165. A helical membrane pass occupies residues 173 to 193; that stretch reads GILSLVVSLVLSSSLQFIINV. Topologically, residues 194–230 are cytoplasmic; sequence TSASLLIHSLRRHIQKMQKNATGFWNPQTEAHVGAMK. A helical membrane pass occupies residues 231–251; sequence LMVYFLILYIPYSVATLVQYL. Topologically, residues 252-262 are extracellular; that stretch reads PFYAGMDMGTK. The chain crosses the membrane as a helical span at residues 263–283; the sequence is SICLIFATLYSPGHSVLIIIT. At 284–299 the chain is on the cytoplasmic side; that stretch reads HPKLKTTAKKILCFKK.

Belongs to the G-protein coupled receptor T2R family.

The protein resides in the membrane. It is found in the cell projection. The protein localises to the cilium membrane. Its function is as follows. Gustducin-coupled receptor implicated in the perception of bitter compounds in the oral cavity and the gastrointestinal tract. Signals through PLCB2 and the calcium-regulated cation channel TRPM5. In airway epithelial cells, binding of denatonium increases the intracellular calcium ion concentration and stimulates ciliary beat frequency. This is Taste receptor type 2 member 4 (TAS2R4) from Pan paniscus (Pygmy chimpanzee).